A 424-amino-acid polypeptide reads, in one-letter code: Tyrosine--tRNA ligase (424 aa).

Y33 contacts L-tyrosine. The 'HIGH' region motif lies at 38–47 (PSADSLHIGH). The L-tyrosine site is built by Y170 and Q174. Positions 230–234 (KFGKT) match the 'KMSKS' region motif. Position 233 (K233) interacts with ATP. One can recognise an S4 RNA-binding domain in the interval 357 to 424 (MSLIDALVRC…RRHYHLIRLV (68 aa)).

The protein belongs to the class-I aminoacyl-tRNA synthetase family. TyrS type 1 subfamily. In terms of assembly, homodimer.

The protein resides in the cytoplasm. The catalysed reaction is tRNA(Tyr) + L-tyrosine + ATP = L-tyrosyl-tRNA(Tyr) + AMP + diphosphate + H(+). In terms of biological role, catalyzes the attachment of tyrosine to tRNA(Tyr) in a two-step reaction: tyrosine is first activated by ATP to form Tyr-AMP and then transferred to the acceptor end of tRNA(Tyr). The sequence is that of Tyrosine--tRNA ligase from Roseiflexus castenholzii (strain DSM 13941 / HLO8).